We begin with the raw amino-acid sequence, 540 residues long: Phosphoenolpyruvate carboxykinase (ATP) (540 aa).

Substrate is bound at residue arginine 65. Lysine 87 bears the N6-acetyllysine mark. Substrate contacts are provided by tyrosine 207 and lysine 213. ATP is bound by residues lysine 213, histidine 232, and 248–256 (GLSGTGKTT). 2 residues coordinate Mn(2+): lysine 213 and histidine 232. Aspartate 269 is a binding site for Mn(2+). ATP-binding positions include glutamate 297, arginine 333, 449–450 (RI), and threonine 455. Arginine 333 lines the substrate pocket. Position 523 is an N6-acetyllysine (lysine 523).

The protein belongs to the phosphoenolpyruvate carboxykinase (ATP) family. In terms of assembly, monomer. It depends on Mn(2+) as a cofactor.

It localises to the cytoplasm. It catalyses the reaction oxaloacetate + ATP = phosphoenolpyruvate + ADP + CO2. The protein operates within carbohydrate biosynthesis; gluconeogenesis. In terms of biological role, involved in the gluconeogenesis. Catalyzes the conversion of oxaloacetate (OAA) to phosphoenolpyruvate (PEP) through direct phosphoryl transfer between the nucleoside triphosphate and OAA. This is Phosphoenolpyruvate carboxykinase (ATP) from Escherichia coli O6:K15:H31 (strain 536 / UPEC).